A 141-amino-acid chain; its full sequence is MVHSQLPVAASLRLLCALLLLPSATMIPGGLSPRSVTDPDVREAAEFAVQEYNALSANAYYYKQLRIVEAQSQVVAGAKYYLTMELMKTKCAKTTGKPKVYKEIQNCELPPKAQQEKLTCRFQVWSRPWLKKTELTKMSCN.

Residues 1 to 26 (MVHSQLPVAASLRLLCALLLLPSATM) form the signal peptide. Positions 29 to 129 (GGLSPRSVTD…CRFQVWSRPW (101 aa)) constitute a Cystatin domain. Residues 73–77 (QVVAG) carry the Secondary area of contact motif. 2 cysteine pairs are disulfide-bonded: cysteine 91-cysteine 107 and cysteine 120-cysteine 140.

This sequence belongs to the cystatin family. Expressed by the venom gland at an extremely low level (at protein level).

It localises to the secreted. Its function is as follows. Inhibits various C1 cysteine proteases including cathepsin L, papain and cathepsin B. This protein has no toxic activity and its function in the venom is unknown. It may play a role as a housekeeping or regulatory protein. The polypeptide is Cystatin (Cryptophis nigrescens (Eastern small-eyed snake)).